The chain runs to 386 residues: Bifunctional enzyme IspD/IspF (386 aa).

Positions 1–230 (MIRDERVAAI…RARSILEAPV (230 aa)) are 2-C-methyl-D-erythritol 4-phosphate cytidylyltransferase. Residues 231–386 (AMGVGYDTHR…HAVALLVRVR (156 aa)) form a 2-C-methyl-D-erythritol 2,4-cyclodiphosphate synthase region. The a divalent metal cation site is built by Asp-237 and His-239. Residues 237–239 (DTH) and 262–263 (HS) each bind 4-CDP-2-C-methyl-D-erythritol 2-phosphate. His-270 is a binding site for a divalent metal cation. 4-CDP-2-C-methyl-D-erythritol 2-phosphate contacts are provided by residues 284–286 (DLG), 289–293 (FPDTD), 360–363 (TTGE), Phe-367, and Arg-370.

This sequence in the N-terminal section; belongs to the IspD/TarI cytidylyltransferase family. IspD subfamily. The protein in the C-terminal section; belongs to the IspF family. A divalent metal cation is required as a cofactor.

The catalysed reaction is 2-C-methyl-D-erythritol 4-phosphate + CTP + H(+) = 4-CDP-2-C-methyl-D-erythritol + diphosphate. It carries out the reaction 4-CDP-2-C-methyl-D-erythritol 2-phosphate = 2-C-methyl-D-erythritol 2,4-cyclic diphosphate + CMP. It participates in isoprenoid biosynthesis; isopentenyl diphosphate biosynthesis via DXP pathway; isopentenyl diphosphate from 1-deoxy-D-xylulose 5-phosphate: step 2/6. It functions in the pathway isoprenoid biosynthesis; isopentenyl diphosphate biosynthesis via DXP pathway; isopentenyl diphosphate from 1-deoxy-D-xylulose 5-phosphate: step 4/6. Functionally, bifunctional enzyme that catalyzes the formation of 4-diphosphocytidyl-2-C-methyl-D-erythritol from CTP and 2-C-methyl-D-erythritol 4-phosphate (MEP) (IspD), and catalyzes the conversion of 4-diphosphocytidyl-2-C-methyl-D-erythritol 2-phosphate (CDP-ME2P) to 2-C-methyl-D-erythritol 2,4-cyclodiphosphate (ME-CPP) with a corresponding release of cytidine 5-monophosphate (CMP) (IspF). This Anaeromyxobacter sp. (strain Fw109-5) protein is Bifunctional enzyme IspD/IspF.